The chain runs to 374 residues: UPF0754 membrane protein SAR1937 (374 aa).

The next 2 helical transmembrane spans lie at 4 to 24 (LFII…TNVI) and 354 to 374 (SLGF…AIFV).

This sequence belongs to the UPF0754 family.

It localises to the cell membrane. The chain is UPF0754 membrane protein SAR1937 from Staphylococcus aureus (strain MRSA252).